A 443-amino-acid chain; its full sequence is Glutamate--tRNA ligase 1 (443 aa).

The 'HIGH' region motif lies at 10–20 (PSPTGYIHVGN). Positions 241–245 (ALSKR) match the 'KMSKS' region motif. K244 is a binding site for ATP.

This sequence belongs to the class-I aminoacyl-tRNA synthetase family. Glutamate--tRNA ligase type 1 subfamily. In terms of assembly, monomer.

The protein resides in the cytoplasm. The catalysed reaction is tRNA(Glu) + L-glutamate + ATP = L-glutamyl-tRNA(Glu) + AMP + diphosphate. Functionally, catalyzes the attachment of glutamate to tRNA(Glu) in a two-step reaction: glutamate is first activated by ATP to form Glu-AMP and then transferred to the acceptor end of tRNA(Glu). The protein is Glutamate--tRNA ligase 1 of Ruegeria pomeroyi (strain ATCC 700808 / DSM 15171 / DSS-3) (Silicibacter pomeroyi).